We begin with the raw amino-acid sequence, 473 residues long: Glutamate--tRNA ligase 1 (473 aa).

The 'HIGH' region signature appears at 11–21; that stretch reads PSPTGFLHIGG. The segment at 111–132 is disordered; the sequence is REQARKEGRPPRYDGRWRDRAE. Residues 240-244 carry the 'KMSKS' region motif; sequence KLSKR. Position 243 (Lys243) interacts with ATP.

Belongs to the class-I aminoacyl-tRNA synthetase family. Glutamate--tRNA ligase type 1 subfamily. As to quaternary structure, monomer.

Its subcellular location is the cytoplasm. It catalyses the reaction tRNA(Glu) + L-glutamate + ATP = L-glutamyl-tRNA(Glu) + AMP + diphosphate. In terms of biological role, catalyzes the attachment of glutamate to tRNA(Glu) in a two-step reaction: glutamate is first activated by ATP to form Glu-AMP and then transferred to the acceptor end of tRNA(Glu). The polypeptide is Glutamate--tRNA ligase 1 (Beijerinckia indica subsp. indica (strain ATCC 9039 / DSM 1715 / NCIMB 8712)).